Reading from the N-terminus, the 247-residue chain is 3-deoxy-manno-octulosonate cytidylyltransferase (247 aa).

It belongs to the KdsB family.

The protein resides in the cytoplasm. The catalysed reaction is 3-deoxy-alpha-D-manno-oct-2-ulosonate + CTP = CMP-3-deoxy-beta-D-manno-octulosonate + diphosphate. It functions in the pathway nucleotide-sugar biosynthesis; CMP-3-deoxy-D-manno-octulosonate biosynthesis; CMP-3-deoxy-D-manno-octulosonate from 3-deoxy-D-manno-octulosonate and CTP: step 1/1. The protein operates within bacterial outer membrane biogenesis; lipopolysaccharide biosynthesis. Functionally, activates KDO (a required 8-carbon sugar) for incorporation into bacterial lipopolysaccharide in Gram-negative bacteria. This is 3-deoxy-manno-octulosonate cytidylyltransferase from Methylorubrum extorquens (strain PA1) (Methylobacterium extorquens).